Reading from the N-terminus, the 189-residue chain is Large ribosomal subunit protein uL10 (189 aa).

The protein belongs to the universal ribosomal protein uL10 family. As to quaternary structure, part of the ribosomal stalk of the 50S ribosomal subunit. The N-terminus interacts with L11 and the large rRNA to form the base of the stalk. The C-terminus forms an elongated spine to which L12 dimers bind in a sequential fashion forming a multimeric L10(L12)X complex.

Forms part of the ribosomal stalk, playing a central role in the interaction of the ribosome with GTP-bound translation factors. The protein is Large ribosomal subunit protein uL10 of Rippkaea orientalis (strain PCC 8801 / RF-1) (Cyanothece sp. (strain PCC 8801)).